Reading from the N-terminus, the 676-residue chain is Double-stranded RNA-specific editase Adar (676 aa).

A disordered region spans residues 1-51 (MKFDSRVMLNSANNNSPQHPVSAPSDINMNGYNRKLPQKRGYEMPKYSDPK). A compositionally biased stretch (polar residues) spans 8–31 (MLNSANNNSPQHPVSAPSDINMNG). The span at 40-51 (RGYEMPKYSDPK) shows a compositional bias: basic and acidic residues. DRBM domains follow at residues 61–127 (QPKN…SFIQ) and 197–272 (ITVD…SLCN). Residues 348–672 (SVSTGTKCVS…LKKPIEQDEF (325 aa)) form the A to I editase domain. His-372 contributes to the Zn(2+) binding site. The Proton donor role is filled by Glu-374. Positions 430 and 493 each coordinate Zn(2+).

As to expression, expressed in embryonic nervous system; late stage 13 sees ventral nerve cord expression which spreads to brain by stage 16. Expression is maintained through to adulthood.

In terms of biological role, has A-to-I RNA editing activity on extended dsRNA: edits RNA-binding protein Rnp4F. A-to-I editing of pre-mRNAs acts predominantly through nervous system targets to affect adult nervous system integrity, function and behavior. Essential for adaptation to environmental stresses, such as oxygen deprivation, and for the prevention of premature neuronal degeneration, through the editing of ion channels as targets. The protein is Double-stranded RNA-specific editase Adar of Drosophila melanogaster (Fruit fly).